The sequence spans 158 residues: MQGRLSAWLVKHGLVHRSLGFDYQGIETLQIKPEEWHSIAVILYVYGYNYLRSQCAYDVAPGGLLASVYHLTRIEYGVDQAEEVCIKVFAPRNNPRIPSVFWVWKSADFQERESYDMLGIRYDNHPRLKRILMPESWIGWPLRKDYIAPNFYEIQDAH.

It belongs to the complex I 30 kDa subunit family. NDH is composed of at least 16 different subunits, 5 of which are encoded in the nucleus.

It is found in the plastid. The protein resides in the chloroplast thylakoid membrane. The enzyme catalyses a plastoquinone + NADH + (n+1) H(+)(in) = a plastoquinol + NAD(+) + n H(+)(out). It carries out the reaction a plastoquinone + NADPH + (n+1) H(+)(in) = a plastoquinol + NADP(+) + n H(+)(out). In terms of biological role, NDH shuttles electrons from NAD(P)H:plastoquinone, via FMN and iron-sulfur (Fe-S) centers, to quinones in the photosynthetic chain and possibly in a chloroplast respiratory chain. The immediate electron acceptor for the enzyme in this species is believed to be plastoquinone. Couples the redox reaction to proton translocation, and thus conserves the redox energy in a proton gradient. This chain is NAD(P)H-quinone oxidoreductase subunit J, chloroplastic, found in Oenothera argillicola (Appalachian evening primrose).